Here is a 399-residue protein sequence, read N- to C-terminus: Phosphatidate cytidylyltransferase 5, chloroplastic (399 aa).

The N-terminal 26 residues, Met-1–Arg-26, are a transit peptide targeting the chloroplast. A run of 6 helical transmembrane segments spans residues Val-123–Leu-143, Phe-187–Leu-207, Leu-217–Leu-237, Val-266–Phe-286, Ala-309–Trp-329, and Leu-333–Thr-353.

It belongs to the CDS family. Mg(2+) serves as cofactor.

The protein localises to the plastid. It localises to the chloroplast membrane. It carries out the reaction a 1,2-diacyl-sn-glycero-3-phosphate + CTP + H(+) = a CDP-1,2-diacyl-sn-glycerol + diphosphate. It participates in phospholipid metabolism; CDP-diacylglycerol biosynthesis; CDP-diacylglycerol from sn-glycerol 3-phosphate: step 3/3. Highest activities is obtained at about 30 mM CTP and 2 mM phosphatidic acid (PA). Its function is as follows. May be involved in the synthesis of minor phospholipids and in modulation of IP3-mediated signal transduction. Promotes the biosynthesis of plastidial phosphatidylglycerol (PG) which is required for structure and function of thylakoid membranes and, hence, for photoautotrophic growth. In Arabidopsis thaliana (Mouse-ear cress), this protein is Phosphatidate cytidylyltransferase 5, chloroplastic.